The following is a 955-amino-acid chain: E3 ubiquitin-protein ligase MIB2 (955 aa).

Methionine 1 bears the N-acetylmethionine mark. An MIB/HERC2 1 domain is found at 1–80 (MDPDPQAGVQ…AHDLLLYDNA (80 aa)). The segment at 86 to 138 (HPNIICDCCKKHGLRGMRWKCRVCLDYDLCTQCYMHNKHELAHAFDRYETAHS) adopts a ZZ-type zinc-finger fold. Residues cysteine 91, cysteine 94, cysteine 106, cysteine 109, cysteine 115, cysteine 118, histidine 124, and histidine 128 each contribute to the Zn(2+) site. In terms of domain architecture, MIB/HERC2 2 spans 149 to 227 (LPRIPLRGIF…KVDLKCVGEA (79 aa)). Serine 251 is modified (phosphoserine). ANK repeat units lie at residues 464–493 (QGRT…GVDL), 497–526 (EGNT…RADA), 530–559 (TQST…DVNL), 563–595 (HSDT…DVTA), 599–628 (QGFT…QLVD), 633–663 (DGFT…DVNV), 667–696 (KLQS…SVNA), 700–728 (EGDT…DPGP), and 769–798 (RGRS…ERQA). 2 RING-type zinc fingers span residues 832–867 (CLVC…IRCQ) and 911–944 (CPIC…PICR).

In terms of assembly, interacts with actin monomer. Ubiquitinated. Possibly via autoubiquitination. As to expression, expressed in skeletal muscle, and to a lesser extent in heart, brain and kidney.

The protein resides in the cytoplasm. The protein localises to the endosome. The enzyme catalyses S-ubiquitinyl-[E2 ubiquitin-conjugating enzyme]-L-cysteine + [acceptor protein]-L-lysine = [E2 ubiquitin-conjugating enzyme]-L-cysteine + N(6)-ubiquitinyl-[acceptor protein]-L-lysine.. It participates in protein modification; protein ubiquitination. In terms of biological role, E3 ubiquitin-protein ligase that mediates ubiquitination of Delta receptors, which act as ligands of Notch proteins. Positively regulates the Delta-mediated Notch signaling by ubiquitinating the intracellular domain of Delta, leading to endocytosis of Delta receptors. This is E3 ubiquitin-protein ligase MIB2 from Homo sapiens (Human).